We begin with the raw amino-acid sequence, 92 residues long: MEITDVRVRKLNEEGKMKAVVSVTFDNEFVVHDIKVIEGQNGLFIAMPSRKTPEGEFKDIAHPINSDTRNKLQSAILKEYEKAKEQEAAHKE.

The protein belongs to the SpoVG family.

Could be involved in septation. This chain is Putative septation protein SpoVG, found in Thermoanaerobacter sp. (strain X514).